We begin with the raw amino-acid sequence, 208 residues long: Endoplasmic reticulum vesicle protein 25 (208 aa).

Residues 1–15 form the signal peptide; it reads MKFLLLLLLAPFISA. The Lumenal portion of the chain corresponds to 16 to 177; that stretch reads LRFDLKAESK…TNESTNERVR (162 aa). In terms of domain architecture, GOLD spans 28-118; sequence QMCIRDFVSE…KRAIELDIES (91 aa). The helical transmembrane segment at 178–198 threads the bilayer; the sequence is NFSVLVIIVLTSLGAWQVNYL. Topologically, residues 199–208 are cytoplasmic; the sequence is KNYFKSKHII.

The protein belongs to the EMP24/GP25L family.

It localises to the endoplasmic reticulum membrane. It is found in the golgi apparatus membrane. Functionally, constituent of COPII-coated endoplasmic reticulum-derived transport vesicles. Required for efficient transport of a subset of secretory proteins to the Golgi. Facilitates retrograde transport from the Golgi to the endoplasmic reticulum. The sequence is that of Endoplasmic reticulum vesicle protein 25 (ERV25) from Candida glabrata (strain ATCC 2001 / BCRC 20586 / JCM 3761 / NBRC 0622 / NRRL Y-65 / CBS 138) (Yeast).